The chain runs to 160 residues: Protein Vago (160 aa).

Residues 1-23 form the signal peptide; the sequence is MESISSMIYLVAMMSLIIGGSQA.

As to expression, expressed in fat body.

The protein resides in the secreted. Probably involved in the antiviral immune response. May have a role in controlling viral load in the adult fat body, after infection with viruses such as the Drosophila C virus. The protein is Protein Vago of Drosophila melanogaster (Fruit fly).